The primary structure comprises 260 residues: Dehydrogenase/reductase SDR family member 11 (260 aa).

A signal peptide spans 1 to 30; the sequence is MARPGMERWRDRLALVTGASGGIGAAVARA. NADP(+)-binding positions include 18–23, 43–44, glutamate 49, 70–71, and asparagine 97; these read GASGGI, RT, and DL. Residues serine 151 and tyrosine 166 each coordinate substrate. NADP(+) is bound by residues tyrosine 166, lysine 170, 201–204, and lysine 208; that span reads VETQ. The active-site Proton acceptor is the tyrosine 166.

This sequence belongs to the short-chain dehydrogenases/reductases (SDR) family. Homotetramer. In terms of tissue distribution, isoform 1: Ubiquitously expressed, with highest levels in testis, small intestine, colon, kidney, brain and heart. Isoform 3: Expressed in brain, heart and skeletal muscle.

It localises to the secreted. It carries out the reaction a 3beta-hydroxysteroid + NADP(+) = a 3-oxosteroid + NADPH + H(+). The catalysed reaction is 17beta-estradiol + NAD(+) = estrone + NADH + H(+). It catalyses the reaction 17beta-estradiol + NADP(+) = estrone + NADPH + H(+). The protein operates within steroid biosynthesis; estrogen biosynthesis. Inhibited by flavonoids including apigenin, luteolin, genistein, kaempferol and quercetin and also by carbenoxolone, zearalenone, glycyrrhetinic, curcumin and flufenamic acid. Its function is as follows. Catalyzes the conversion of the 17-keto group of estrone, 4- and 5-androstenes and 5-alpha-androstanes into their 17-beta-hydroxyl metabolites and the conversion of the 3-keto group of 3-, 3,17- and 3,20- diketosteroids into their 3-hydroxyl metabolites. Exhibits reductive 3-beta-hydroxysteroid dehydrogenase activity toward 5-beta-androstanes, 5-beta-pregnanes, 4-pregnenes and bile acids. May also reduce endogenous and exogenous alpha-dicarbonyl compounds and xenobiotic alicyclic ketones. This Homo sapiens (Human) protein is Dehydrogenase/reductase SDR family member 11 (DHRS11).